The sequence spans 744 residues: MALRYPESDPVVRTVKHRLDSTDAAAHAAAPARTTTHPGAHPPLSAKDVRRLSMFAPALVRPAIVDSFRKLSPRAQAKNPVMFVVYIGSILTTLLWVMALRGQAEAPAGFILAVSVWLWFTVLFANVAEALAEGRSKQQAASLRGIKTTVQAKVLADPQRRDRVQPRAATALRRGDIVLIEAGDMVPGDGEVIEGVASVDESAITGESAPVIRESGGDFSSVTGGTRVLSDWIVARITANPGESFLDRMISMVEGAKRQKTPNELALTILLVSLTIILLLATVTLLPYSIFSVEVMKAAGVTSSPITITVLVALLVCLIPTTIGGLLSAIGVAGMSRMMQANVIATSGRAVEAAGDVDVLLLDKTGTITHGNRQASRFIPAPGVTVKALAEAAWLSSLADETPEGRSIVTLARQLGEAAVDEAALARSQPVFVPFSAQTRMSGINVALGDAAHQIRKGAADAIRTHVTVLAGRFPEAVLAAVEDVARKGGTPLVVSDNDRVMGVVELKDIVKAGIRERFAELRQMGIKTVMITGDNRLTAASIAAEAGVDDFIAEAAPETKLALIREQQAQGRLVAMTGDGTNDAPALAQADVAVAMNSGTQAAKEAGNMVDLDSSPTKLIQIVEIGKQMLMTRGSLTTFSIANDVAKYFAIIPAAFATTYPQLAALNVMRLATPASAVMSAVIFNALIIVFLIPLALKGVKYRPLGAAALLRRNLWIYGLGGLLLPFPGIKLIDMFLAAMGWV.

A run of 4 helical transmembrane segments spans residues 80 to 100 (PVMF…VMAL), 108 to 128 (AGFI…ANVA), 265 to 285 (LALT…TVTL), and 310 to 330 (VLVA…LSAI). Catalysis depends on Asp363, which acts as the 4-aspartylphosphate intermediate. Residues Asp400, Glu404, 435–442 (FSAQTRMS), and Lys457 each bind ATP. The Mg(2+) site is built by Asp580 and Asp584. 3 consecutive transmembrane segments (helical) span residues 650-670 (FAII…LNVM), 678-698 (AVMS…PLAL), and 724-744 (LLLP…MGWV).

Belongs to the cation transport ATPase (P-type) (TC 3.A.3) family. Type IA subfamily. As to quaternary structure, the system is composed of three essential subunits: KdpA, KdpB and KdpC.

It localises to the cell inner membrane. The enzyme catalyses K(+)(out) + ATP + H2O = K(+)(in) + ADP + phosphate + H(+). Its function is as follows. Part of the high-affinity ATP-driven potassium transport (or Kdp) system, which catalyzes the hydrolysis of ATP coupled with the electrogenic transport of potassium into the cytoplasm. This subunit is responsible for energy coupling to the transport system and for the release of the potassium ions to the cytoplasm. This chain is Potassium-transporting ATPase ATP-binding subunit, found in Ralstonia nicotianae (strain ATCC BAA-1114 / GMI1000) (Ralstonia solanacearum).